Consider the following 88-residue polypeptide: Exodeoxyribonuclease 7 small subunit (88 aa).

It belongs to the XseB family. Heterooligomer composed of large and small subunits.

The protein localises to the cytoplasm. The catalysed reaction is Exonucleolytic cleavage in either 5'- to 3'- or 3'- to 5'-direction to yield nucleoside 5'-phosphates.. Functionally, bidirectionally degrades single-stranded DNA into large acid-insoluble oligonucleotides, which are then degraded further into small acid-soluble oligonucleotides. The sequence is that of Exodeoxyribonuclease 7 small subunit from Bordetella petrii (strain ATCC BAA-461 / DSM 12804 / CCUG 43448).